A 239-amino-acid polypeptide reads, in one-letter code: Probable intron-encoded endonuclease I-ZbiI (239 aa).

The protein belongs to the LAGLIDADG endonuclease family.

The protein localises to the mitochondrion. Its function is as follows. Endonuclease involved in mitochondrial 21S rRNA gene intron homing. This chain is Probable intron-encoded endonuclease I-ZbiI, found in Zygosaccharomyces bisporus.